The sequence spans 391 residues: MSSSTVITNIAALVTNDPSLGDHSPLGLVRDAAVVVEGDRVVWTGESSKAPATDNRVDADGRAVLPGFVDSHSHLLFAGDRTEEFNARMSGRPYSAGGIRTTVAATRAASDAELEAGLTRYLAEALRQGTTTFETKSGYGLTTADESRALRVAARHTDEVTFLGAHIVAPELADDPAAYVDLVTGEMLDACAPHARWIDVFCEKGAFDGDQARAILTAGKARGLHPRIHANQLSYGPGVRLAVELDAASADHCTHLTDADVDALANSRTVATLLPGAEFSTRAQWPDARRLIDAGATVALSTDCNPGSSFTSSVPFCIALAVRDMGMTPDEAVWSATAGGAAALRREDVGRLVPGAYADLTLLDAPSHVHLAYRPGVPLVAGVWRRGVRKV.

Positions 72 and 74 each coordinate Fe(3+). Zn(2+)-binding residues include H72 and H74. The 4-imidazolone-5-propanoate site is built by R81, Y139, and H166. Y139 provides a ligand contact to N-formimidoyl-L-glutamate. H229 contacts Fe(3+). H229 contributes to the Zn(2+) binding site. Q232 lines the 4-imidazolone-5-propanoate pocket. Residue D303 coordinates Fe(3+). D303 provides a ligand contact to Zn(2+). Positions 305 and 307 each coordinate N-formimidoyl-L-glutamate. S308 is a 4-imidazolone-5-propanoate binding site.

It belongs to the metallo-dependent hydrolases superfamily. HutI family. It depends on Zn(2+) as a cofactor. Fe(3+) is required as a cofactor.

It localises to the cytoplasm. It catalyses the reaction 4-imidazolone-5-propanoate + H2O = N-formimidoyl-L-glutamate. It functions in the pathway amino-acid degradation; L-histidine degradation into L-glutamate; N-formimidoyl-L-glutamate from L-histidine: step 3/3. Its function is as follows. Catalyzes the hydrolytic cleavage of the carbon-nitrogen bond in imidazolone-5-propanoate to yield N-formimidoyl-L-glutamate. It is the third step in the universal histidine degradation pathway. This Streptomyces coelicolor (strain ATCC BAA-471 / A3(2) / M145) protein is Imidazolonepropionase.